The chain runs to 209 residues: ATP synthase subunit delta (209 aa).

Belongs to the ATPase delta chain family. In terms of assembly, F-type ATPases have 2 components, F(1) - the catalytic core - and F(0) - the membrane proton channel. F(1) has five subunits: alpha(3), beta(3), gamma(1), delta(1), epsilon(1). F(0) has three main subunits: a(1), b(2) and c(10-14). The alpha and beta chains form an alternating ring which encloses part of the gamma chain. F(1) is attached to F(0) by a central stalk formed by the gamma and epsilon chains, while a peripheral stalk is formed by the delta and b chains.

Its subcellular location is the cell inner membrane. Its function is as follows. F(1)F(0) ATP synthase produces ATP from ADP in the presence of a proton or sodium gradient. F-type ATPases consist of two structural domains, F(1) containing the extramembraneous catalytic core and F(0) containing the membrane proton channel, linked together by a central stalk and a peripheral stalk. During catalysis, ATP synthesis in the catalytic domain of F(1) is coupled via a rotary mechanism of the central stalk subunits to proton translocation. Functionally, this protein is part of the stalk that links CF(0) to CF(1). It either transmits conformational changes from CF(0) to CF(1) or is implicated in proton conduction. The chain is ATP synthase subunit delta from Psychrobacter sp. (strain PRwf-1).